We begin with the raw amino-acid sequence, 156 residues long: Ribosome maturation factor RimP (156 aa).

Belongs to the RimP family.

The protein localises to the cytoplasm. Required for maturation of 30S ribosomal subunits. In Halalkalibacterium halodurans (strain ATCC BAA-125 / DSM 18197 / FERM 7344 / JCM 9153 / C-125) (Bacillus halodurans), this protein is Ribosome maturation factor RimP.